Here is a 66-residue protein sequence, read N- to C-terminus: HEKELIEALQEVLKKLKSKRIPIYEKKYGQVPMCDAGEQCAVRKGARIGKLCDCPRGTSCNSFLLK.

2 disulfide bridges follow: cysteine 34–cysteine 52 and cysteine 40–cysteine 60.

Belongs to the CART family.

The protein localises to the secreted. Its function is as follows. Satiety factor closely associated with the actions of leptin and neuropeptide y; this anorectic peptide inhibits both normal and starvation-induced feeding and completely blocks the feeding response induced by neuropeptide Y and regulated by leptin in the hypothalamus. The sequence is that of Cocaine- and amphetamine-regulated transcript protein (CARTPT) from Sus scrofa (Pig).